We begin with the raw amino-acid sequence, 81 residues long: Photosystem I iron-sulfur center (81 aa).

4Fe-4S ferredoxin-type domains follow at residues 2-31 (SHAV…MVPW) and 37-68 (GQIA…IRVY). 8 residues coordinate [4Fe-4S] cluster: Cys11, Cys14, Cys17, Cys21, Cys48, Cys51, Cys54, and Cys58.

The cyanobacterial PSI reaction center is composed of one copy each of PsaA,B,C,D,E,F,I,J,K,L,M and X, and forms trimeric complexes. The cofactor is [4Fe-4S] cluster.

The protein resides in the cellular thylakoid membrane. It carries out the reaction reduced [plastocyanin] + hnu + oxidized [2Fe-2S]-[ferredoxin] = oxidized [plastocyanin] + reduced [2Fe-2S]-[ferredoxin]. Functionally, apoprotein for the two 4Fe-4S centers FA and FB of photosystem I (PSI); essential for photochemical activity. FB is the terminal electron acceptor of PSI, donating electrons to ferredoxin. The C-terminus interacts with PsaA/B/D and helps assemble the protein into the PSI complex. Required for binding of PsaD and PsaE to PSI. PSI is a plastocyanin/cytochrome c6-ferredoxin oxidoreductase, converting photonic excitation into a charge separation, which transfers an electron from the donor P700 chlorophyll pair to the spectroscopically characterized acceptors A0, A1, FX, FA and FB in turn. This Synechococcus sp. (strain WH8103) protein is Photosystem I iron-sulfur center.